Consider the following 178-residue polypeptide: MSFIKTFSGKHFYYDKINKDDIVINDIAVSLSNICRFAGHLSHFYSVAQHAVLCSQLVPQEFAFEALMHDATEAYCQDIPAPLKRLLPDYKRMEEKIDAVIREKYGLPPVMSTPVKYADLIMLATERRDLGLDDGSFWPVLEGIPATEMFNVIPLAPGHAYGMFMERFNDLSELRKCA.

This is an uncharacterized protein from Escherichia coli (strain K12).